We begin with the raw amino-acid sequence, 76 residues long: Protein OPG128 (76 aa).

A disulfide bond links cysteine 17 and cysteine 21.

The protein belongs to the orthopoxvirus OPG128 family. Interacts with sulfhydryl oxidase OPG072; this interaction involves formation of a transient disulfide-bonded intermediate, allowing disulfide bond transfer. Interacts with OPG088; this interaction involves formation of a transient disulfide-bonded intermediate, allowing disulfide bond transfer.

Its function is as follows. Late protein which probably participates in disulfide bond formation by functioning as a thiol-disulfide transfer protein between membrane-associated OPG072 and OPG08. The complete pathway for formation of disulfide bonds in intracellular virion membrane proteins sequentially involves oxidation of OPG072, OPG128 and OPG08. The chain is Protein OPG128 (OPG128) from Variola virus (isolate Human/India/Ind3/1967) (VARV).